The following is a 192-amino-acid chain: MIKVSRKTNETDISVELNLYGMGKASIDTGVPFLDHMLDQVARHGLMDLTIKCDGDIQIDDHHSVEDIGITLGQAFVQAVGDKKGLIRYGYSYVPLDESLSRVVLDLSGRPSLKLNVSFTRAMIGTFDVDLISEFFQGFVNHALVTLHIDNLKGINSHHQAETIFKAFGRALRVAITEDERQEGIPSTKGSL.

The protein belongs to the imidazoleglycerol-phosphate dehydratase family.

Its subcellular location is the cytoplasm. The catalysed reaction is D-erythro-1-(imidazol-4-yl)glycerol 3-phosphate = 3-(imidazol-4-yl)-2-oxopropyl phosphate + H2O. It functions in the pathway amino-acid biosynthesis; L-histidine biosynthesis; L-histidine from 5-phospho-alpha-D-ribose 1-diphosphate: step 6/9. In Vesicomyosocius okutanii subsp. Calyptogena okutanii (strain HA), this protein is Imidazoleglycerol-phosphate dehydratase.